The sequence spans 328 residues: D-cysteine desulfhydrase (328 aa).

K51 bears the N6-(pyridoxal phosphate)lysine mark.

This sequence belongs to the ACC deaminase/D-cysteine desulfhydrase family. As to quaternary structure, homodimer. Requires pyridoxal 5'-phosphate as cofactor.

It catalyses the reaction D-cysteine + H2O = hydrogen sulfide + pyruvate + NH4(+) + H(+). Functionally, catalyzes the alpha,beta-elimination reaction of D-cysteine and of several D-cysteine derivatives. It could be a defense mechanism against D-cysteine. This Salmonella schwarzengrund (strain CVM19633) protein is D-cysteine desulfhydrase.